Here is a 340-residue protein sequence, read N- to C-terminus: Phosphoribosylformylglycinamidine cyclo-ligase (340 aa).

This sequence belongs to the AIR synthase family.

Its subcellular location is the cytoplasm. The enzyme catalyses 2-formamido-N(1)-(5-O-phospho-beta-D-ribosyl)acetamidine + ATP = 5-amino-1-(5-phospho-beta-D-ribosyl)imidazole + ADP + phosphate + H(+). The protein operates within purine metabolism; IMP biosynthesis via de novo pathway; 5-amino-1-(5-phospho-D-ribosyl)imidazole from N(2)-formyl-N(1)-(5-phospho-D-ribosyl)glycinamide: step 2/2. This is Phosphoribosylformylglycinamidine cyclo-ligase from Streptococcus pneumoniae serotype 2 (strain D39 / NCTC 7466).